The sequence spans 507 residues: MAGRRLARASISAVGVWLLCALGLQATEAELPSAPAELPGGAACLSRFTSGVPSFVLDTEASVSNGATFLGSPTARRGWDCVRSCCTTQNCNLALVELQPDGGEDAISACFLMNCLYEQNFVCKFAPKEGFINYLTQELYRSYRELRTRGFGGSRIPRIWMGIDLKVQLQKPLVLNEADNTDWHLLQGDSDVRVERKRPEEVELWGLKEGTYLFQLTRTDSDQPEETANLTITVLTAKQTEDYCLASYKVGRCRGSFPRWYYDPKEQICKSFTFGGCLGNKNNYLREEECMLACKDVQGISPKRHHPVCSGSCHATQFRCSNGCCIDGFLECDDTPDCPDGSDEATCEKYTSGFDELQNIHFLSDKGYCAELPDTGFCKENIPRWYYNPFSERCARFTYGGCYGNKNNFEEEQQCLESCRGISKKDVFGLRREGSIPTVGSAEVAIAVFLVICIIVVLTILGYCFFKNQRKEFHSPLHHPPPTPASSTVSTTEDTEHLVYNHTTQPL.

The signal sequence occupies residues methionine 1 to alanine 29. Residues glycine 51–tyrosine 134 form the MANSC domain. An N-linked (GlcNAc...) asparagine glycan is attached at asparagine 229. Positions cysteine 244 to cysteine 294 constitute a BPTI/Kunitz inhibitor 1 domain. Disulfide bonds link cysteine 244-cysteine 294, cysteine 253-cysteine 277, cysteine 269-cysteine 290, cysteine 320-cysteine 338, cysteine 332-cysteine 347, cysteine 369-cysteine 419, cysteine 378-cysteine 402, and cysteine 394-cysteine 415. The region spanning serine 312–glutamate 348 is the LDL-receptor class A domain. One can recognise a BPTI/Kunitz inhibitor 2 domain in the interval cysteine 369 to cysteine 419. N-linked (GlcNAc...) asparagine glycosylation occurs at asparagine 501.

As to quaternary structure, interacts with HGFAC. Interacts with TMPRSS13; the interaction promotes the phosphorylation and cell membrane localization of TMPRSS13.

It is found in the secreted. The protein resides in the cytoplasm. It localises to the cell membrane. Functionally, inhibitor of HGFAC. Inhibits serine protease activity of ST14/matriptase in vitro. Inhibits serine protease activity of TMPRSS13, via the BPTI/Kunitz inhibitor 1 domain. This Mus musculus (Mouse) protein is Kunitz-type protease inhibitor 1 (Spint1).